We begin with the raw amino-acid sequence, 137 residues long: Large ribosomal subunit protein uL16 (137 aa).

The disordered stretch occupies residues 1–20 (MLQPKRTKFRKQQKMRNRGL).

Belongs to the universal ribosomal protein uL16 family. As to quaternary structure, part of the 50S ribosomal subunit.

Its function is as follows. Binds 23S rRNA and is also seen to make contacts with the A and possibly P site tRNAs. This chain is Large ribosomal subunit protein uL16, found in Francisella philomiragia subsp. philomiragia (strain ATCC 25017 / CCUG 19701 / FSC 153 / O#319-036).